We begin with the raw amino-acid sequence, 89 residues long: Small ribosomal subunit protein bS16c (89 aa).

This sequence belongs to the bacterial ribosomal protein bS16 family.

Its subcellular location is the plastid. It localises to the chloroplast. In Drimys granadensis, this protein is Small ribosomal subunit protein bS16c.